A 159-amino-acid polypeptide reads, in one-letter code: SsrA-binding protein (159 aa).

The tract at residues 137–159 (DKRETEKQRDWSREKGRLLKERG) is disordered.

It belongs to the SmpB family.

The protein resides in the cytoplasm. In terms of biological role, required for rescue of stalled ribosomes mediated by trans-translation. Binds to transfer-messenger RNA (tmRNA), required for stable association of tmRNA with ribosomes. tmRNA and SmpB together mimic tRNA shape, replacing the anticodon stem-loop with SmpB. tmRNA is encoded by the ssrA gene; the 2 termini fold to resemble tRNA(Ala) and it encodes a 'tag peptide', a short internal open reading frame. During trans-translation Ala-aminoacylated tmRNA acts like a tRNA, entering the A-site of stalled ribosomes, displacing the stalled mRNA. The ribosome then switches to translate the ORF on the tmRNA; the nascent peptide is terminated with the 'tag peptide' encoded by the tmRNA and targeted for degradation. The ribosome is freed to recommence translation, which seems to be the essential function of trans-translation. The chain is SsrA-binding protein from Mesorhizobium japonicum (strain LMG 29417 / CECT 9101 / MAFF 303099) (Mesorhizobium loti (strain MAFF 303099)).